Consider the following 409-residue polypeptide: tRNA-specific 2-thiouridylase MnmA (409 aa).

Residues 43–50 (AMSGGVDS) and Leu-69 contribute to the ATP site. Cys-137 functions as the Nucleophile in the catalytic mechanism. Cys-137 and Cys-235 are joined by a disulfide. Gly-161 is an ATP binding site. Positions 185-187 (KDQ) are interaction with tRNA. Cys-235 serves as the catalytic Cysteine persulfide intermediate.

Belongs to the MnmA/TRMU family.

Its subcellular location is the cytoplasm. The enzyme catalyses S-sulfanyl-L-cysteinyl-[protein] + uridine(34) in tRNA + AH2 + ATP = 2-thiouridine(34) in tRNA + L-cysteinyl-[protein] + A + AMP + diphosphate + H(+). Functionally, catalyzes the 2-thiolation of uridine at the wobble position (U34) of tRNA, leading to the formation of s(2)U34. The sequence is that of tRNA-specific 2-thiouridylase MnmA from Caulobacter sp. (strain K31).